A 329-amino-acid polypeptide reads, in one-letter code: MAGLKGLLFGGILFAMCGGLSEGQKKKEMVLSDKVGQLMDWASKRPVIRMNGDKFRRFIKSPPRNYSVVVMFTALQAHRQCVVCKQADEEYQILANSWRYSSAFTNRIFFAVVDFDEGSDVFQMLNMNSAPTFINFPPKGKPKKGDTYELQVRGFAAEQLARWVADRTDVNIRVIRPPNYAGPLMLGLLLAVIGGLVYLRRSNLDFLNNKTGWALAALCFVLAMTSGQMWNHIRGPPYAHKNPHTNQVNYIHGSSQAQFVAETHIVLLFNGAVTLGMVLLHEAATSDLDVGKRKIMCIAGITLVVIFFSWLLSVFRSKYHGYPYSFLMT.

The signal sequence occupies residues 1–23; sequence MAGLKGLLFGGILFAMCGGLSEG. Topologically, residues 24 to 178 are extracellular; it reads QKKKEMVLSD…DVNIRVIRPP (155 aa). The 129-residue stretch at 41–169 folds into the Thioredoxin domain; that stretch reads WASKRPVIRM…LARWVADRTD (129 aa). N-linked (GlcNAc...) asparagine glycosylation is present at asparagine 65. Cysteine 81 and cysteine 84 are joined by a disulfide. Residues 179 to 199 traverse the membrane as a helical segment; it reads NYAGPLMLGLLLAVIGGLVYL. Residues 200 to 212 are Cytoplasmic-facing; it reads RRSNLDFLNNKTG. The chain crosses the membrane as a helical span at residues 213 to 233; sequence WALAALCFVLAMTSGQMWNHI. Topologically, residues 234–258 are extracellular; sequence RGPPYAHKNPHTNQVNYIHGSSQAQ. A helical membrane pass occupies residues 259 to 279; the sequence is FVAETHIVLLFNGAVTLGMVL. At 280–294 the chain is on the cytoplasmic side; sequence LHEAATSDLDVGKRK. The helical transmembrane segment at 295–315 threads the bilayer; that stretch reads IMCIAGITLVVIFFSWLLSVF. At 316–329 the chain is on the extracellular side; that stretch reads RSKYHGYPYSFLMT.

This sequence belongs to the OST3/OST6 family. In terms of assembly, accessory component of the STT3B-containing form of the oligosaccharyltransferase (OST) complex.

It is found in the cell membrane. The protein resides in the endoplasmic reticulum. Its subcellular location is the endoplasmic reticulum membrane. It participates in protein modification; protein glycosylation. Its function is as follows. Accessory component of the STT3B-containing form of the N-oligosaccharyl transferase (OST) complex which catalyzes the transfer of a high mannose oligosaccharide from a lipid-linked oligosaccharide donor to an asparagine residue within an Asn-X-Ser/Thr consensus motif in nascent polypeptide chains. May be involved in substrate-specific N-glycosylation involving acceptor sites that are near cysteine residues. Could indirectly play a role in Mg(2+) transport in epithelial cells. This chain is Dolichyl-diphosphooligosaccharide--protein glycosyltransferase subunit MAGT1, found in Xenopus laevis (African clawed frog).